The primary structure comprises 128 residues: Glycine cleavage system H protein (128 aa).

Positions 22 to 104 (VATVGITEHA…YGEGWIFKMK (83 aa)) constitute a Lipoyl-binding domain. N6-lipoyllysine is present on lysine 63.

Belongs to the GcvH family. In terms of assembly, the glycine cleavage system is composed of four proteins: P, T, L and H. The cofactor is (R)-lipoate.

Functionally, the glycine cleavage system catalyzes the degradation of glycine. The H protein shuttles the methylamine group of glycine from the P protein to the T protein. The polypeptide is Glycine cleavage system H protein (Methylacidiphilum infernorum (isolate V4) (Methylokorus infernorum (strain V4))).